We begin with the raw amino-acid sequence, 432 residues long: MALYQGAAFFMLVASCVCSTVFHREQQTWFEGVFLSSMCPVNVSAGTLYGIMFDAGSTGTRIHVYTFVQKVPDNTGQLPVLEGEIFDSVKPGLSAFVDQPKQGAETVQELLEVAKDSIPPSHWKRTPVVLKATAGLRLLPEEKAEALLFEVKEIFKKSPFLVPDDSVSIMDGSYEGILAWVTVNFLTGQLHGHNQETVGTLDLGGASTQITFLPQFEKTLEQTPRDYLTSFEMFNSTYKLYTHSYLGFGLKAARLATLGALETAGIDGYTFRSACLPRWLEAEWIFGGVKYQYGGNQEAGEVGFEPCYAEVLRVVQGKLHQPDEVQRGSFYAFSYYYDRAVDTDMIDYEKGGVLKVEDFERKAREVCDNLENFTSGSPFLCMDLSYITALLKDGFGFASSTVLQLTKKVNNIETGWALGATFHLLQSLGISH.

The N-terminal stretch at 1–24 is a signal peptide; the sequence is MALYQGAAFFMLVASCVCSTVFHR. Glutamate 175 serves as the catalytic Proton acceptor. An N-linked (GlcNAc...) asparagine glycan is attached at asparagine 235. Disulfide bonds link cysteine 275–cysteine 307 and cysteine 367–cysteine 381. The N-linked (GlcNAc...) asparagine glycan is linked to asparagine 372.

Belongs to the GDA1/CD39 NTPase family. Monomer; active form. Homodimer; disulfide-linked. Homodimers are enzymatically inactive. The cofactor is Ca(2+). Mg(2+) is required as a cofactor. N-glycosylated; high-mannose type.

The protein localises to the endoplasmic reticulum. The protein resides in the secreted. It carries out the reaction a ribonucleoside 5'-diphosphate + H2O = a ribonucleoside 5'-phosphate + phosphate + H(+). The enzyme catalyses GDP + H2O = GMP + phosphate + H(+). The catalysed reaction is UDP + H2O = UMP + phosphate + H(+). It catalyses the reaction IDP + H2O = IMP + phosphate + H(+). It carries out the reaction CDP + H2O = CMP + phosphate + H(+). The enzyme catalyses ADP + H2O = AMP + phosphate + H(+). It participates in protein modification; protein glycosylation. In terms of biological role, hydrolyzes nucleoside diphosphates with a preference for GDP, IDP and UDP compared to ADP and CDP. In the lumen of the endoplasmic reticulum, hydrolyzes UDP that acts as an end-product feedback inhibitor of the UDP-Glc:glycoprotein glucosyltransferases. UMP can be transported back by an UDP-sugar antiporter to the cytosol where it is consumed to regenerate UDP-glucose. Therefore, it positively regulates protein reglucosylation by clearing UDP from the ER lumen and by promoting the regeneration of UDP-glucose. Protein reglucosylation is essential to proper glycoprotein folding and quality control in the ER. The protein is Ectonucleoside triphosphate diphosphohydrolase 5 (ENTPD5) of Bos taurus (Bovine).